Here is a 174-residue protein sequence, read N- to C-terminus: Guided entry of tail-anchored proteins factor 1 (174 aa).

The Lumenal portion of the chain corresponds to 1–8; the sequence is MSSAAADH. The helical transmembrane segment at 9–29 threads the bilayer; sequence WAWLLVLSFVFGCNVLRVLLP. Residues 30 to 99 are Cytoplasmic-facing; it reads SFSSFMSRVL…VKARTAQLAK (70 aa). The stretch at 39-94 forms a coiled coil; sequence LQKDAEQESQMRAEIQDMKQELSTVNMMDEFARYARLERKINKMTDKLKTHVKART. Residues 39–97 are interaction with GET3/TRC40; it reads LQKDAEQESQMRAEIQDMKQELSTVNMMDEFARYARLERKINKMTDKLKTHVKARTAQL. A helical transmembrane segment spans residues 100–120; sequence IKWVISVAFYVLQAALMISLI. Residues 121–148 lie on the Lumenal side of the membrane; it reads WKYYSVPVAVVPSKWITPLDRLVAFPTR. A helical membrane pass occupies residues 149–169; it reads VAGGVGITCWILVCNKVVAIV. Topologically, residues 170–174 are cytoplasmic; it reads LHPFS.

This sequence belongs to the WRB/GET1 family. Component of the Golgi to ER traffic (GET) complex, which is composed of GET1/WRB, CAMLG/GET2 and GET3. Within the complex, GET1 and CAMLG form a heterotetramer which is stabilized by phosphatidylinositol binding and which binds to the GET3 homodimer. Interacts with CAMLG (via C-terminus). GET3 shows a higher affinity for CAMLG than for GET1.

It localises to the endoplasmic reticulum membrane. In terms of biological role, required for the post-translational delivery of tail-anchored (TA) proteins to the endoplasmic reticulum. Together with CAMLG/GET2, acts as a membrane receptor for soluble GET3/TRC40, which recognizes and selectively binds the transmembrane domain of TA proteins in the cytosol. Required to ensure correct topology and ER insertion of CAMLG. The chain is Guided entry of tail-anchored proteins factor 1 from Pongo abelii (Sumatran orangutan).